A 154-amino-acid polypeptide reads, in one-letter code: Thioredoxin-like protein CXXS2 (154 aa).

The 126-residue stretch at 23–148 (RRNKTQARSQ…LQKKTAAAAN (126 aa)) folds into the Thioredoxin domain. Serine 31 is subject to Phosphoserine.

The protein belongs to the thioredoxin family. Ubiquitous.

Its subcellular location is the cytoplasm. Possesses low disulfide reductase activity, but efficient protein disulfide isomerase activity. Does not possess deglutathionylation activity. The sequence is that of Thioredoxin-like protein CXXS2 (CXXS2) from Arabidopsis thaliana (Mouse-ear cress).